The chain runs to 188 residues: Abscisic acid receptor PYL8 (188 aa).

The segment at 25 to 176 is START-like; that stretch reads HELVDNQCSS…NLKSLADISE (152 aa). Cys-32 and Cys-157 are joined by a disulfide. Lys-61 contacts abscisate. At Thr-77 the chain carries Phosphothreonine; by CARK1. The short motif at 85–89 is the Gate loop element; the sequence is SGLPA. Abscisate contacts are provided by residues 89–94, 116–122, and Glu-141; these read ATRSTE and RLKNYSS. The Latch loop signature appears at 115–117; it reads HRL.

It belongs to the PYR/PYL/RCAR abscisic acid intracellular receptor family. As to quaternary structure, monomer. Homodimer. Binds ABA on one subunit only. interacts with ABI1 and HAB1, and possibly with other PP2Cs. Binds to CARs protein in an ABA-independent manner, both at the plasma membrane and in the nucleus. Interacts directly with CAR1 and CAR4. Interacts with MYB44, MYB73 and MYB77 in an ABA-independent manner. Interacts with DDA1. Interacts with CARK1 in the cytosol. Binds to ABI1 when phosphorylated by CARK1. Interacts with AIP1 in the nucleus. Post-translationally, phosphorylated by CARK1 especially in response to abscisic acid (ABA); this phosphorylation promotes its stability and inhibitory ability to ABI1. In terms of processing, ubiquitinated in DDA1- and CDD complex-dependent manner. Ubiquitination leads to its subsequent proteasomal degradation.

The protein localises to the cytoplasm. The protein resides in the cytosol. It localises to the nucleus. Its subcellular location is the cell membrane. Its function is as follows. Receptor for abscisic acid (ABA) required for ABA-mediated responses such as stomatal closure and germination inhibition. Inhibits the activity of group-A protein phosphatases type 2C (PP2Cs) in an ABA-independent manner but more efficiently when activated by ABA. Confers enhanced sensitivity to ABA. Can be activated by both (-)-ABA and (+)-ABA. Mediates crosstalk between ABA and auxin signaling to regulate lateral root growth. Required for lateral root growth suppression by ABA. In response to auxin, promotes lateral root growth by enhancing MYB77-dependent transcription of the auxin-responsive gene IAA19. Enhances the abilities of MYB44 and MYB73 to activate IAA19 gene. In Arabidopsis thaliana (Mouse-ear cress), this protein is Abscisic acid receptor PYL8.